We begin with the raw amino-acid sequence, 22 residues long: Piscidin-3 (22 aa).

Gly22 carries the post-translational modification Glycine amide.

This sequence belongs to the pleurocidin family. As to expression, mast cells in gill, skin and gut, and in lining blood vessels in the viscera.

The protein resides in the secreted. The protein localises to the membrane. In terms of biological role, antimicrobial peptide with broad-spectrum activity against Gram-positive and Gram-negative bacteria. Rapidly inactivates both channel catfish herpesvirus (ED(50)=11 uM) and frog virus 3 (ED(50)=16 uM) over a wide temperature range. Has hemolytic activity. The protein is Piscidin-3 of Morone chrysops x Morone saxatilis (White bass x Striped bass).